A 427-amino-acid chain; its full sequence is 3-phosphoshikimate 1-carboxyvinyltransferase (427 aa).

3-phosphoshikimate contacts are provided by K22, S23, and R27. K22 provides a ligand contact to phosphoenolpyruvate. 2 residues coordinate phosphoenolpyruvate: G96 and R124. S169, S170, Q171, S197, D313, N336, and K340 together coordinate 3-phosphoshikimate. Residue Q171 coordinates phosphoenolpyruvate. Residue D313 is the Proton acceptor of the active site. Phosphoenolpyruvate contacts are provided by R344, R386, and K411.

This sequence belongs to the EPSP synthase family. As to quaternary structure, monomer.

The protein localises to the cytoplasm. The catalysed reaction is 3-phosphoshikimate + phosphoenolpyruvate = 5-O-(1-carboxyvinyl)-3-phosphoshikimate + phosphate. The protein operates within metabolic intermediate biosynthesis; chorismate biosynthesis; chorismate from D-erythrose 4-phosphate and phosphoenolpyruvate: step 6/7. Its function is as follows. Catalyzes the transfer of the enolpyruvyl moiety of phosphoenolpyruvate (PEP) to the 5-hydroxyl of shikimate-3-phosphate (S3P) to produce enolpyruvyl shikimate-3-phosphate and inorganic phosphate. The polypeptide is 3-phosphoshikimate 1-carboxyvinyltransferase (Escherichia coli (strain SMS-3-5 / SECEC)).